We begin with the raw amino-acid sequence, 241 residues long: Diacetyl reductase [(S)-acetoin forming] (241 aa).

6-30 (LVTGAGQGIGKAIALRLVKDGFAVA) is a binding site for NAD(+). Serine 139 contributes to the substrate binding site. The active-site Proton acceptor is the tyrosine 152. Lysine 156 is an active-site residue.

It belongs to the short-chain dehydrogenases/reductases (SDR) family. Homotetramer.

The catalysed reaction is (S)-acetoin + NAD(+) = diacetyl + NADH + H(+). In terms of biological role, catalyzes the irreversible reduction of 2,3-butanediol to (S)-acetoin in the presence of NADH. In Raoultella terrigena (Klebsiella terrigena), this protein is Diacetyl reductase [(S)-acetoin forming] (budC).